The following is a 284-amino-acid chain: 4-diphosphocytidyl-2-C-methyl-D-erythritol kinase (284 aa).

Lysine 9 is an active-site residue. 92–102 is a binding site for ATP; it reads PMGGGIGGGSS. Residue aspartate 134 is part of the active site.

The protein belongs to the GHMP kinase family. IspE subfamily.

The enzyme catalyses 4-CDP-2-C-methyl-D-erythritol + ATP = 4-CDP-2-C-methyl-D-erythritol 2-phosphate + ADP + H(+). Its pathway is isoprenoid biosynthesis; isopentenyl diphosphate biosynthesis via DXP pathway; isopentenyl diphosphate from 1-deoxy-D-xylulose 5-phosphate: step 3/6. In terms of biological role, catalyzes the phosphorylation of the position 2 hydroxy group of 4-diphosphocytidyl-2C-methyl-D-erythritol. The polypeptide is 4-diphosphocytidyl-2-C-methyl-D-erythritol kinase (Stutzerimonas stutzeri (strain A1501) (Pseudomonas stutzeri)).